Here is a 305-residue protein sequence, read N- to C-terminus: Ribonuclease BN (305 aa).

The Zn(2+) site is built by H64, H66, D68, H69, H141, D212, and H270. D68 functions as the Proton acceptor in the catalytic mechanism.

The protein belongs to the RNase Z family. RNase BN subfamily. Homodimer. It depends on Zn(2+) as a cofactor.

Functionally, zinc phosphodiesterase, which has both exoribonuclease and endoribonuclease activities. The protein is Ribonuclease BN of Escherichia coli O17:K52:H18 (strain UMN026 / ExPEC).